Here is a 298-residue protein sequence, read N- to C-terminus: Mitochondrial 2-oxodicarboxylate carrier (298 aa).

Solcar repeat units lie at residues 10–99 (HETC…YKKF), 106–195 (SPGL…VKDN), and 204–293 (LEFL…TYAW). A run of 6 helical transmembrane segments spans residues 16-36 (VAAGGCAGLVEICLMHPLDVV), 69-88 (FGFYKGIIPPILAETPKRAV), 112-132 (PIAGLGSGLTEAVVVNPFEVV), 166-186 (GLNKGFTATLGRHGIFNMTYF), 204-224 (LEFLRKFGIGFVSGTVGSVFN), and 276-296 (LGPGGGVMLLVYEYTYAWLQE).

Belongs to the mitochondrial carrier (TC 2.A.29) family. Widely expressed.

Its subcellular location is the mitochondrion inner membrane. It catalyses the reaction 2-oxoadipate(in) + 2-oxoglutarate(out) = 2-oxoadipate(out) + 2-oxoglutarate(in). The enzyme catalyses hexanedioate(in) + 2-oxoglutarate(out) = hexanedioate(out) + 2-oxoglutarate(in). The catalysed reaction is L-2-aminoadipate(in) + 2-oxoglutarate(out) = L-2-aminoadipate(out) + 2-oxoglutarate(in). It carries out the reaction glutarate(in) + 2-oxoglutarate(out) = glutarate(out) + 2-oxoglutarate(in). It catalyses the reaction 2-oxoheptanedioate(in) + 2-oxoglutarate(out) = 2-oxoheptanedioate(out) + 2-oxoglutarate(in). The enzyme catalyses heptanedioate(in) + 2-oxoglutarate(out) = heptanedioate(out) + 2-oxoglutarate(in). The catalysed reaction is citrate(in) + 2-oxoglutarate(out) = citrate(out) + 2-oxoglutarate(in). Functionally, transports dicarboxylates across the inner membranes of mitochondria by a counter-exchange mechanism. Can transport 2-oxoadipate (2-oxohexanedioate), 2-oxoglutarate, adipate (hexanedioate), glutarate, and to a lesser extent, pimelate (heptanedioate), 2-oxopimelate (2-oxoheptanedioate), 2-aminoadipate (2-aminohexanedioate), oxaloacetate, and citrate. Plays a central role in catabolism of lysine, hydroxylysine, and tryptophan, by transporting common metabolite intermediates (such as 2-oxoadipate) into the mitochondria, where it is converted into acetyl-CoA and can enter the citric acid (TCA) cycle. This Rattus norvegicus (Rat) protein is Mitochondrial 2-oxodicarboxylate carrier (Slc25a21).